The following is a 454-amino-acid chain: Bifunctional protein GlmU (454 aa).

A pyrophosphorylase region spans residues 1–226; sequence MSTTVIILAA…AFEVEGVNDR (226 aa). UDP-N-acetyl-alpha-D-glucosamine is bound by residues 8–11, lysine 22, glutamine 73, 78–79, 100–102, glycine 137, glutamate 151, asparagine 166, and asparagine 224; these read LAAG, GT, and YGD. Aspartate 102 lines the Mg(2+) pocket. Asparagine 224 lines the Mg(2+) pocket. The segment at 227–247 is linker; sequence LQLAALEREFQKQQAKELMQQ. The tract at residues 248–454 is N-acetyltransferase; that stretch reads GVTFADPARF…NYQRPQKLKK (207 aa). UDP-N-acetyl-alpha-D-glucosamine-binding residues include arginine 330 and lysine 348. The active-site Proton acceptor is the histidine 360. UDP-N-acetyl-alpha-D-glucosamine-binding residues include tyrosine 363 and asparagine 374. Acetyl-CoA contacts are provided by residues alanine 377, 383-384, serine 402, alanine 420, and arginine 437; that span reads NY.

In the N-terminal section; belongs to the N-acetylglucosamine-1-phosphate uridyltransferase family. The protein in the C-terminal section; belongs to the transferase hexapeptide repeat family. In terms of assembly, homotrimer. It depends on Mg(2+) as a cofactor.

The protein localises to the cytoplasm. It carries out the reaction alpha-D-glucosamine 1-phosphate + acetyl-CoA = N-acetyl-alpha-D-glucosamine 1-phosphate + CoA + H(+). It catalyses the reaction N-acetyl-alpha-D-glucosamine 1-phosphate + UTP + H(+) = UDP-N-acetyl-alpha-D-glucosamine + diphosphate. It functions in the pathway nucleotide-sugar biosynthesis; UDP-N-acetyl-alpha-D-glucosamine biosynthesis; N-acetyl-alpha-D-glucosamine 1-phosphate from alpha-D-glucosamine 6-phosphate (route II): step 2/2. Its pathway is nucleotide-sugar biosynthesis; UDP-N-acetyl-alpha-D-glucosamine biosynthesis; UDP-N-acetyl-alpha-D-glucosamine from N-acetyl-alpha-D-glucosamine 1-phosphate: step 1/1. The protein operates within bacterial outer membrane biogenesis; LPS lipid A biosynthesis. Catalyzes the last two sequential reactions in the de novo biosynthetic pathway for UDP-N-acetylglucosamine (UDP-GlcNAc). The C-terminal domain catalyzes the transfer of acetyl group from acetyl coenzyme A to glucosamine-1-phosphate (GlcN-1-P) to produce N-acetylglucosamine-1-phosphate (GlcNAc-1-P), which is converted into UDP-GlcNAc by the transfer of uridine 5-monophosphate (from uridine 5-triphosphate), a reaction catalyzed by the N-terminal domain. The sequence is that of Bifunctional protein GlmU from Acinetobacter baumannii (strain AYE).